Here is a 197-residue protein sequence, read N- to C-terminus: Guanylate kinase (197 aa).

A Guanylate kinase-like domain is found at 10-187; sequence GSLFIVSAPA…AYQVLRSILI (178 aa). 17-24 lines the ATP pocket; the sequence is APAGTGKT.

It belongs to the guanylate kinase family.

The protein localises to the cytoplasm. The enzyme catalyses GMP + ATP = GDP + ADP. Essential for recycling GMP and indirectly, cGMP. In Protochlamydia amoebophila (strain UWE25), this protein is Guanylate kinase.